We begin with the raw amino-acid sequence, 132 residues long: uncharacterized protein (132 aa).

The N-terminal stretch at 1–25 (MRFTKVVGFLSVLGLAAVFPLTAQA) is a signal peptide.

This is an uncharacterized protein from Bacillus subtilis (strain 168).